The primary structure comprises 240 residues: Protein FAM246C (240 aa).

Disordered regions lie at residues 1–117 (MAEP…WRSA) and 161–240 (LPAA…TRAA). Composition is skewed to basic and acidic residues over residues 19–31 (EVLR…RRDP) and 60–74 (AASR…KLVE). The span at 165 to 175 (SPAPSPAPRPA) shows a compositional bias: pro residues. Positions 176 to 187 (ARPCRGRSAPLA) are enriched in low complexity.

This sequence belongs to the FAM246 family.

This Homo sapiens (Human) protein is Protein FAM246C.